Here is a 358-residue protein sequence, read N- to C-terminus: MLERLNFIENKYEELSNKISDPSVMANQKEWQKLCKEHADLEIIVNTYREYKKAQEDLESDKEMLKEESDKELREMAQEEIKELTLKLEDLERELTILLLPKDPNDDKDVFIEIRAGAGGEEAALFASNLLRMYTRYAERKNWKVETISLNATDIGGFKEVTVAVKGKGAYSRLKYESGVHRVQRVPDTESSGRIHTSTATVAVLPEVDDVDININANDLRIDVYRASGHGGQCVNTTDSAVRITHLPTGLVVTCQDEKSQLKNKEKAMKVLKARLFEAAEAERAASIAEDRKSQVGTGDRSERIRTYNYPQGRITDHRIGLTLYKLETFLDGDIDEAIEALVTEDQAEKMKDLGRVN.

Q233 carries the post-translational modification N5-methylglutamine.

Belongs to the prokaryotic/mitochondrial release factor family. Post-translationally, methylated by PrmC. Methylation increases the termination efficiency of RF1.

It is found in the cytoplasm. In terms of biological role, peptide chain release factor 1 directs the termination of translation in response to the peptide chain termination codons UAG and UAA. The sequence is that of Peptide chain release factor 1 from Clostridium botulinum (strain ATCC 19397 / Type A).